The sequence spans 294 residues: Farnesyl diphosphate synthase (294 aa).

Residues lysine 45, arginine 48, and histidine 77 each contribute to the isopentenyl diphosphate site. Residues aspartate 84 and aspartate 90 each contribute to the Mg(2+) site. Arginine 95 contacts (2E)-geranyl diphosphate. Arginine 96 contacts isopentenyl diphosphate. The (2E)-geranyl diphosphate site is built by lysine 181, threonine 182, and glutamine 220.

This sequence belongs to the FPP/GGPP synthase family. The cofactor is Mg(2+).

The protein localises to the cytoplasm. It carries out the reaction isopentenyl diphosphate + (2E)-geranyl diphosphate = (2E,6E)-farnesyl diphosphate + diphosphate. In Buchnera aphidicola subsp. Schizaphis graminum (strain Sg), this protein is Farnesyl diphosphate synthase (ispA).